The primary structure comprises 293 residues: Probable porphobilinogen deaminase (293 aa).

S-(dipyrrolylmethanemethyl)cysteine is present on C233.

The protein belongs to the HMBS family. Requires dipyrromethane as cofactor.

The catalysed reaction is 4 porphobilinogen + H2O = hydroxymethylbilane + 4 NH4(+). The protein operates within porphyrin-containing compound metabolism; protoporphyrin-IX biosynthesis; coproporphyrinogen-III from 5-aminolevulinate: step 2/4. In terms of biological role, tetrapolymerization of the monopyrrole PBG into the hydroxymethylbilane pre-uroporphyrinogen in several discrete steps. In Saccharolobus islandicus (strain M.16.27) (Sulfolobus islandicus), this protein is Probable porphobilinogen deaminase.